We begin with the raw amino-acid sequence, 207 residues long: Large ribosomal subunit protein uL4 (207 aa).

The disordered stretch occupies residues 55 to 76 (ALVSGGGKKPWRQKGTGRARHG). Basic residues predominate over residues 63 to 76 (KPWRQKGTGRARHG).

It belongs to the universal ribosomal protein uL4 family. As to quaternary structure, part of the 50S ribosomal subunit.

Functionally, one of the primary rRNA binding proteins, this protein initially binds near the 5'-end of the 23S rRNA. It is important during the early stages of 50S assembly. It makes multiple contacts with different domains of the 23S rRNA in the assembled 50S subunit and ribosome. Forms part of the polypeptide exit tunnel. The sequence is that of Large ribosomal subunit protein uL4 from Phytoplasma mali (strain AT).